The following is a 208-amino-acid chain: Thymidylate kinase (208 aa).

An ATP-binding site is contributed by 10 to 17 (GPDGSGKT).

This sequence belongs to the thymidylate kinase family.

The catalysed reaction is dTMP + ATP = dTDP + ADP. Functionally, phosphorylation of dTMP to form dTDP in both de novo and salvage pathways of dTTP synthesis. The polypeptide is Thymidylate kinase (Listeria welshimeri serovar 6b (strain ATCC 35897 / DSM 20650 / CCUG 15529 / CIP 8149 / NCTC 11857 / SLCC 5334 / V8)).